The following is a 273-amino-acid chain: Orotidine 5'-phosphate decarboxylase (273 aa).

Catalysis depends on Lys95, which acts as the Proton donor.

Belongs to the OMP decarboxylase family. Type 2 subfamily.

The enzyme catalyses orotidine 5'-phosphate + H(+) = UMP + CO2. Its pathway is pyrimidine metabolism; UMP biosynthesis via de novo pathway; UMP from orotate: step 2/2. This is Orotidine 5'-phosphate decarboxylase from Bordetella bronchiseptica (strain ATCC BAA-588 / NCTC 13252 / RB50) (Alcaligenes bronchisepticus).